The primary structure comprises 811 residues: Ent-13-epi-manoyl oxide synthase KSL2, chloroplastic (811 aa).

A chloroplast-targeting transit peptide spans 1-49 (MALPLSTCLLFHPKESRSRRFCFSPASAASLKSGLHSATSAKIASMPTC). Aspartate 550, aspartate 554, asparagine 694, and glutamate 702 together coordinate Mg(2+). The DDXXD motif signature appears at 550–554 (DDFFD).

This sequence belongs to the terpene synthase family. Requires Mg(2+) as cofactor.

The protein localises to the plastid. It is found in the chloroplast. It catalyses the reaction ent-8alpha-hydroxylabd-13-en-15-yl diphosphate = ent-13-epi-manoyl oxide + diphosphate. It functions in the pathway secondary metabolite biosynthesis; terpenoid biosynthesis. Involved in diterpenoid biosynthesis. Catalyzes the conversion of ent-8alpha-hydroxylabd-13-en-15-yl diphosphate to ent-13-epi-manoyl oxide. This chain is Ent-13-epi-manoyl oxide synthase KSL2, chloroplastic, found in Salvia miltiorrhiza (Chinese sage).